Here is a 1920-residue protein sequence, read N- to C-terminus: rRNA biogenesis protein RRP5 (1920 aa).

Residues 1 to 65 (MVVPQKKFAN…GTSLSKKERE (65 aa)) form a disordered region. 15 consecutive S1 motif domains span residues 128–210 (GMKL…LSLR), 226–291 (GMVF…LSSD), 314–384 (GMMV…LTLS), 400–473 (GDIF…GTLK), 490–557 (GMVT…VTYK), 577–646 (GLVT…LSFM), 661–733 (GSIV…LSSK), 753–822 (NSVV…LSLK), 866–930 (GSLI…LSLR), 958–1031 (EVHQ…LLLD), 1054–1129 (GSVV…LSVK), 1153–1224 (GQCV…LVQR), 1260–1334 (GDIL…LSLR), 1369–1438 (DMGV…VTLK), and 1459–1529 (GDMI…LGMK). Disordered stretches follow at residues 1535 to 1555 (NGDD…ECDP) and 1605 to 1652 (TDFD…LEHH). Residues 1620–1652 (NKDEKSKRREKQKDKEEREKKIQAAEGRLLEHH) are compositionally biased toward basic and acidic residues. HAT repeat units lie at residues 1651–1683 (HHAP…FMLS), 1685–1722 (ADIE…LENE), 1726–1758 (PPEE…YERT), 1759–1791 (EQYK…SSLK), 1828–1860 (GVAD…QEIR), and 1862–1897 (GEDD…YEKS).

Highly expressed in flowers and at lower levels in roots, leaves, stems and siliques.

The protein resides in the nucleus. It is found in the nucleolus. Involved in the biogenesis of ribosomal RNA (rRNA). Required for the formation of 5.8S rRNA. Required for normal development of female gametophytes. The protein is rRNA biogenesis protein RRP5 of Arabidopsis thaliana (Mouse-ear cress).